Consider the following 163-residue polypeptide: Putative pre-16S rRNA nuclease (163 aa).

The protein belongs to the YqgF nuclease family.

Its subcellular location is the cytoplasm. Could be a nuclease involved in processing of the 5'-end of pre-16S rRNA. The protein is Putative pre-16S rRNA nuclease of Zymomonas mobilis subsp. mobilis (strain ATCC 31821 / ZM4 / CP4).